Reading from the N-terminus, the 296-residue chain is Ribosomal RNA small subunit methyltransferase A (296 aa).

S-adenosyl-L-methionine contacts are provided by asparagine 31, leucine 33, glycine 58, glutamate 79, aspartate 111, and asparagine 136.

This sequence belongs to the class I-like SAM-binding methyltransferase superfamily. rRNA adenine N(6)-methyltransferase family. RsmA subfamily.

It localises to the cytoplasm. The catalysed reaction is adenosine(1518)/adenosine(1519) in 16S rRNA + 4 S-adenosyl-L-methionine = N(6)-dimethyladenosine(1518)/N(6)-dimethyladenosine(1519) in 16S rRNA + 4 S-adenosyl-L-homocysteine + 4 H(+). Its function is as follows. Specifically dimethylates two adjacent adenosines (A1518 and A1519) in the loop of a conserved hairpin near the 3'-end of 16S rRNA in the 30S particle. May play a critical role in biogenesis of 30S subunits. This is Ribosomal RNA small subunit methyltransferase A from Lactobacillus johnsonii (strain CNCM I-12250 / La1 / NCC 533).